Reading from the N-terminus, the 204-residue chain is Tetraspanin-13 (204 aa).

Residues 1–19 are Cytoplasmic-facing; it reads MVCGGFSCSKNCLCALNLL. A helical transmembrane segment spans residues 20-40; that stretch reads YTLVSLLLIGIAAWGIGFGLI. Topologically, residues 41–44 are extracellular; it reads SSLR. The chain crosses the membrane as a helical span at residues 45–65; that stretch reads VVGVVIAVGIFLFLIALVGLI. The Cytoplasmic portion of the chain corresponds to 66-72; it reads GAVKHHQ. The chain crosses the membrane as a helical span at residues 73-93; that stretch reads VLLFFYMIILLLVFIVQFSVS. At 94 to 167 the chain is on the extracellular side; it reads CACLALNREQ…IGEYAGEVLR (74 aa). Asn113 and Asn137 each carry an N-linked (GlcNAc...) asparagine glycan. Position 143 is a phosphoserine (Ser143). Residues 168 to 188 traverse the membrane as a helical segment; the sequence is FVGGIGLFFSFTEILGVWLTY. The Cytoplasmic segment spans residues 189–204; that stretch reads RYRNQKDPRANPSAFL.

The protein belongs to the tetraspanin (TM4SF) family.

The protein resides in the membrane. This is Tetraspanin-13 (Tspan13) from Mus musculus (Mouse).